Here is a 341-residue protein sequence, read N- to C-terminus: HTH-type transcriptional repressor PurR (341 aa).

The 55-residue stretch at 2–56 (ATIKDVAKRAGVSTTTVSHVINKTRFVADETREAVWVAIKELHYSPSAVARSLKV) folds into the HTH lacI-type domain. A DNA-binding region (H-T-H motif) is located at residues 4–23 (IKDVAKRAGVSTTTVSHVIN). The DNA-binding element occupies 48–56 (SAVARSLKV). 5 residues coordinate hypoxanthine: Tyr-73, Arg-190, Thr-192, Phe-221, and Asp-275.

Homodimer.

The protein operates within purine metabolism; purine nucleotide biosynthesis [regulation]. Functionally, is the main repressor of the genes involved in the de novo synthesis of purine nucleotides, regulating purB, purC, purEK, purF, purHD, purL, purMN and guaBA expression. PurR is allosterically activated to bind its cognate DNA by binding the purine corepressors, hypoxanthine or guanine, thereby effecting transcription repression. This Erwinia tasmaniensis (strain DSM 17950 / CFBP 7177 / CIP 109463 / NCPPB 4357 / Et1/99) protein is HTH-type transcriptional repressor PurR.